A 317-amino-acid polypeptide reads, in one-letter code: Ventral anterior homeobox 1 (317 aa).

The segment at 1-62 (MEVRYSQDSE…CEKSRASSGD (62 aa)) is disordered. A compositionally biased stretch (basic and acidic residues) spans 18–27 (GLKEGKEGKD). A DNA-binding region (homeobox) is located at residues 92-151 (PKRTRTSFTAEQLYRLEMEFQRCQYVVGRERTELARQLNLSETQVKVWFQNRRTKQKKDQ). Residues 203 to 248 (GPSLGITANGGSSSSSRSSAGSSGTAGGSPPLPTVTSSGTVTGLQG) form a disordered region. Over residues 212 to 225 (GGSSSSSRSSAGSS) the composition is skewed to low complexity. Residues 236–247 (TVTSSGTVTGLQ) are compositionally biased toward polar residues.

Belongs to the EMX homeobox family. As to expression, expressed in the anterior neural keel and later in the preoptic area and optic stalk.

The protein resides in the nucleus. Its function is as follows. Transcription factor that is required for closure of the choroid fissure and together with Vax2 is required for optic nerve differentiation and to limit retinal development to the optic cup. The chain is Ventral anterior homeobox 1 (vax1) from Danio rerio (Zebrafish).